Consider the following 249-residue polypeptide: Triosephosphate isomerase (249 aa).

Positions 10 and 12 each coordinate substrate. His94 acts as the Electrophile in catalysis. Catalysis depends on Glu166, which acts as the Proton acceptor.

Belongs to the triosephosphate isomerase family. As to quaternary structure, homodimer. Post-translationally, the N-terminus is blocked.

It catalyses the reaction D-glyceraldehyde 3-phosphate = dihydroxyacetone phosphate. The protein operates within carbohydrate biosynthesis; gluconeogenesis. It functions in the pathway carbohydrate degradation; glycolysis; D-glyceraldehyde 3-phosphate from glycerone phosphate: step 1/1. In Paracoccidioides lutzii (strain ATCC MYA-826 / Pb01) (Paracoccidioides brasiliensis), this protein is Triosephosphate isomerase (TPI1).